Here is a 235-residue protein sequence, read N- to C-terminus: Phosphoribosylaminoimidazole-succinocarboxamide synthase (235 aa).

Belongs to the SAICAR synthetase family.

It carries out the reaction 5-amino-1-(5-phospho-D-ribosyl)imidazole-4-carboxylate + L-aspartate + ATP = (2S)-2-[5-amino-1-(5-phospho-beta-D-ribosyl)imidazole-4-carboxamido]succinate + ADP + phosphate + 2 H(+). It functions in the pathway purine metabolism; IMP biosynthesis via de novo pathway; 5-amino-1-(5-phospho-D-ribosyl)imidazole-4-carboxamide from 5-amino-1-(5-phospho-D-ribosyl)imidazole-4-carboxylate: step 1/2. This chain is Phosphoribosylaminoimidazole-succinocarboxamide synthase, found in Nautilia profundicola (strain ATCC BAA-1463 / DSM 18972 / AmH).